The following is a 296-amino-acid chain: NAD kinase (296 aa).

Aspartate 73 functions as the Proton acceptor in the catalytic mechanism. Residues 73-74, lysine 78, 151-152, arginine 178, aspartate 180, and 191-196 each bind NAD(+); these read DG, NE, and TAHAMS.

This sequence belongs to the NAD kinase family. It depends on a divalent metal cation as a cofactor.

It localises to the cytoplasm. The catalysed reaction is NAD(+) + ATP = ADP + NADP(+) + H(+). Functionally, involved in the regulation of the intracellular balance of NAD and NADP, and is a key enzyme in the biosynthesis of NADP. Catalyzes specifically the phosphorylation on 2'-hydroxyl of the adenosine moiety of NAD to yield NADP. In Francisella tularensis subsp. tularensis (strain FSC 198), this protein is NAD kinase.